Here is a 102-residue protein sequence, read N- to C-terminus: Putative septation protein SpoVG 1 (102 aa).

Belongs to the SpoVG family.

Could be involved in septation. This chain is Putative septation protein SpoVG 1, found in Listeria monocytogenes serotype 4b (strain F2365).